Consider the following 395-residue polypeptide: 8-amino-7-oxononanoate synthase (395 aa).

Arg-24 is a substrate binding site. 111–112 (GF) is a binding site for pyridoxal 5'-phosphate. His-136 contacts substrate. Pyridoxal 5'-phosphate contacts are provided by residues Ser-184, 209–212 (DDAH), and 240–243 (TLSK). N6-(pyridoxal phosphate)lysine is present on Lys-243. Thr-357 provides a ligand contact to substrate.

The protein belongs to the class-II pyridoxal-phosphate-dependent aminotransferase family. BioF subfamily. As to quaternary structure, homodimer. Pyridoxal 5'-phosphate serves as cofactor.

The enzyme catalyses 6-carboxyhexanoyl-[ACP] + L-alanine + H(+) = (8S)-8-amino-7-oxononanoate + holo-[ACP] + CO2. Its pathway is cofactor biosynthesis; biotin biosynthesis. Its function is as follows. Catalyzes the decarboxylative condensation of pimeloyl-[acyl-carrier protein] and L-alanine to produce 8-amino-7-oxononanoate (AON), [acyl-carrier protein], and carbon dioxide. This Alkaliphilus oremlandii (strain OhILAs) (Clostridium oremlandii (strain OhILAs)) protein is 8-amino-7-oxononanoate synthase.